The sequence spans 185 residues: Ribosome-recycling factor (185 aa).

The protein belongs to the RRF family.

It is found in the cytoplasm. Responsible for the release of ribosomes from messenger RNA at the termination of protein biosynthesis. May increase the efficiency of translation by recycling ribosomes from one round of translation to another. The chain is Ribosome-recycling factor from Thermus thermophilus (strain ATCC BAA-163 / DSM 7039 / HB27).